Consider the following 270-residue polypeptide: MTTIAVIGGGQIGEALVSGLIAANMNPQNIRVTNRSEERGQELRDRYGILNMTDNSQAADEADVVFLCVKPKFIVEVLSEITGTLDNNSAQSVVVSMAAGISIAAMEESASAGLPVVRVMPNTPMLVGKGMSTVTKGRYVDAEQLEQVKDLLSTVGDVLEVAESDIDAVTAMSGSSPAYLFLVTEALIEAGVNLGLPRATAKKLAVASFEGAATMMKETGKEPSELRAGVSSPAGTTVAAIRELEESGIRGAFYRAAQACADRSEELGKH.

Belongs to the pyrroline-5-carboxylate reductase family.

Its subcellular location is the cytoplasm. It carries out the reaction L-proline + NADP(+) = (S)-1-pyrroline-5-carboxylate + NADPH + 2 H(+). The catalysed reaction is L-proline + NAD(+) = (S)-1-pyrroline-5-carboxylate + NADH + 2 H(+). Its pathway is amino-acid biosynthesis; L-proline biosynthesis; L-proline from L-glutamate 5-semialdehyde: step 1/1. Functionally, catalyzes the reduction of 1-pyrroline-5-carboxylate (PCA) to L-proline. In Corynebacterium melassecola, this protein is Pyrroline-5-carboxylate reductase.